We begin with the raw amino-acid sequence, 56 residues long: Calsequestrin-1 (56 aa).

Position 9 is a phosphotyrosine (Y9). Residue S47 is modified to Phosphoserine.

This sequence belongs to the calsequestrin family. As to quaternary structure, monomer; increases in response to a depletion of intracellular calcium. Homodimer. Homotetramer and homopolymer. Can form linear homooligomers. Ca(2+) ions promote oligomerization. Interacts (via C-terminal end and preferentially with the monomeric form) with STIM1; this interaction increases in response to a depletion of intracellular calcium, decreases both STIM1 aggregation and clustering, interaction of STIM1 with ORAI1 and store-operated Ca(2+) entry (SOCE) activity. Interacts with ASPH and TRDN. N-glycosylated.

The protein resides in the endoplasmic reticulum. Its subcellular location is the sarcoplasmic reticulum. It is found in the sarcoplasmic reticulum lumen. The protein localises to the sarcoplasmic reticulum membrane. It localises to the mitochondrion matrix. Functionally, calsequestrin is a high-capacity, moderate affinity, calcium-binding protein and thus acts as an internal calcium store in muscle. Calcium ions are bound by clusters of acidic residues at the protein surface, often at the interface between subunits. Can bind around 80 Ca(2+) ions. Regulates the release of lumenal Ca(2+) via the calcium release channel RYR1; this plays an important role in triggering muscle contraction. Negatively regulates store-operated Ca(2+) entry (SOCE) activity. This is Calsequestrin-1 (CASQ1) from Canis lupus familiaris (Dog).